Consider the following 309-residue polypeptide: Cytochrome c1, heme protein, mitochondrial (309 aa).

The transit peptide at 1–61 (MFSNLSKRWA…LYADSLTAEA (61 aa)) directs the protein to the mitochondrion. The Mitochondrial intermembrane portion of the chain corresponds to 62 to 262 (MTAAEHGLHA…TFLNWCAEPE (201 aa)). Residues 88–241 (ASIRRGYQVY…DMVEYEDGTP (154 aa)) enclose the Cytochrome c domain. Residues Cys-101, Cys-104, and His-105 each coordinate heme c. Residues 131-140 (EFEYDDEPDE) are compositionally biased toward acidic residues. The segment at 131 to 168 (EFEYDDEPDEQGNPKKRPGKLSDYIPGPYPNEQAARAA) is disordered. Residue Met-225 participates in heme c binding. A helical transmembrane segment spans residues 263–296 (HDERKRLGLKTVIILSSLYLLSIWVKKFKWAGIK). The Mitochondrial matrix portion of the chain corresponds to 297 to 309 (TRKFVFNPPKPRK).

The protein belongs to the cytochrome c family. As to quaternary structure, component of the ubiquinol-cytochrome c oxidoreductase (cytochrome b-c1 complex, complex III, CIII), a multisubunit enzyme composed of 10 subunits. The complex is composed of 3 respiratory subunits cytochrome b (COB), cytochrome c1 (CYT1) and Rieske protein (RIP1), 2 core protein subunits COR1 and QCR2, and 5 low-molecular weight protein subunits QCR6, QCR7, QCR8, QCR9 and QCR10. The complex exists as an obligatory dimer and forms supercomplexes (SCs) in the inner mitochondrial membrane with a monomer or a dimer of cytochrome c oxidase (complex IV, CIV), resulting in 2 different assemblies (supercomplexes III(2)IV and III(2)IV(2)). CYT1 interacts with COX5A at the CIII-CIV interface. It depends on heme c as a cofactor.

The protein resides in the mitochondrion inner membrane. It catalyses the reaction a quinol + 2 Fe(III)-[cytochrome c](out) = a quinone + 2 Fe(II)-[cytochrome c](out) + 2 H(+)(out). Its function is as follows. Component of the ubiquinol-cytochrome c oxidoreductase, a multisubunit transmembrane complex that is part of the mitochondrial electron transport chain which drives oxidative phosphorylation. The respiratory chain contains 3 multisubunit complexes succinate dehydrogenase (complex II, CII), ubiquinol-cytochrome c oxidoreductase (cytochrome b-c1 complex, complex III, CIII) and cytochrome c oxidase (complex IV, CIV), that cooperate to transfer electrons derived from NADH and succinate to molecular oxygen, creating an electrochemical gradient over the inner membrane that drives transmembrane transport and the ATP synthase. The cytochrome b-c1 complex catalyzes electron transfer from ubiquinol to cytochrome c, linking this redox reaction to translocation of protons across the mitochondrial inner membrane, with protons being carried across the membrane as hydrogens on the quinol. In the process called Q cycle, 2 protons are consumed from the matrix, 4 protons are released into the intermembrane space and 2 electrons are passed to cytochrome c. Cytochrome c1 is a catalytic core subunit containing a c-type heme. It transfers electrons from the [2Fe-2S] iron-sulfur cluster of the Rieske protein to cytochrome c. This Saccharomyces cerevisiae (strain ATCC 204508 / S288c) (Baker's yeast) protein is Cytochrome c1, heme protein, mitochondrial (CYT1).